We begin with the raw amino-acid sequence, 482 residues long: Arginine/ornithine antiporter (482 aa).

At 1-10 (MSQESSQKLR) the chain is on the cytoplasmic side. The chain crosses the membrane as a helical span at residues 11–31 (LGALTALVVGSMIGGGIFSLP). The Periplasmic portion of the chain corresponds to 32–40 (QNMAASADV). The helical transmembrane segment at 41–61 (GAVLIGWAITAVGMLTLAFVF) threads the bilayer. Topologically, residues 62–100 (QTLANRKPELDGGVYAYAKAGFGDYMGFSSAWGYWISAW) are cytoplasmic. Residues 101–121 (LGNVGYFVLLFSTLGYFFPIF) form a helical membrane-spanning segment. At 122 to 124 (GKG) the chain is on the periplasmic side. Residues 125–145 (DTVAAIVCASVLLWALHFLVL) form a helical membrane-spanning segment. Over 146 to 156 (RGIKEAAFINT) the chain is Cytoplasmic. The chain crosses the membrane as a helical span at residues 157-177 (VTTVAKVVPLFLFILICLFAF). Residues 178-202 (KLDIFTADIWGKSNPDLGSVMNQVR) are Periplasmic-facing. Residues 203 to 223 (NMMLVTVWVFIGIEGASIFSS) traverse the membrane as a helical segment. At 224 to 235 (RAEKRSDVGKAT) the chain is on the cytoplasmic side. Residues 236–256 (VIGFITVLLLLVLVNVLSMGV) form a helical membrane-spanning segment. Residues 257–283 (MTQPELAKLQNPSMALVLEHVVGHWGA) are Periplasmic-facing. A helical transmembrane segment spans residues 284–304 (VLISVGLLISLLGALLSWVLL). The Cytoplasmic portion of the chain corresponds to 305–333 (CAEIMFAAAKDHTMPEFLRRENANQVPAN). Residues 334-354 (ALWLTNICVQVFLVVVFFTSG) traverse the membrane as a helical segment. Residues 355–365 (DPDGMDPYTKM) are Periplasmic-facing. Residues 366 to 386 (LLLATSMILIPYFWSAAYGLL) form a helical membrane-spanning segment. Residues 387–403 (LTLKGETYENDARERSK) are Cytoplasmic-facing. Residues 404–424 (DLVIAGIAVAYAVWLLYAGGL) form a helical membrane-spanning segment. Position 425 (K425) is a topological domain, periplasmic. The helical transmembrane segment at 426–446 (YLLLSALLYAPGAILFAKAKH) threads the bilayer. The Cytoplasmic portion of the chain corresponds to 447 to 458 (EVGQPIFTGIEK). The chain crosses the membrane as a helical span at residues 459 to 479 (LIFAAVVIGALVAAYGLYDGF). The Periplasmic portion of the chain corresponds to 480-482 (LTL).

The protein belongs to the amino acid-polyamine-organocation (APC) superfamily. Basic amino acid/polyamine antiporter (APA) (TC 2.A.3.2) family.

The protein localises to the cell inner membrane. It catalyses the reaction L-ornithine(in) + L-arginine(out) = L-ornithine(out) + L-arginine(in). Its function is as follows. Catalyzes electroneutral exchange between arginine and ornithine to allow high-efficiency energy conversion in the arginine deiminase pathway. Also mediates the proton motive force-driven uptake of arginine and ornithine, but the exchange is several orders of magnitude faster than the proton motive force-driven transport. The chain is Arginine/ornithine antiporter from Pseudomonas aeruginosa (strain ATCC 15692 / DSM 22644 / CIP 104116 / JCM 14847 / LMG 12228 / 1C / PRS 101 / PAO1).